The following is a 331-amino-acid chain: Tyrosine--tRNA ligase (331 aa).

L-tyrosine is bound by residues tyrosine 31, tyrosine 155, glutamine 159, aspartate 162, and glutamine 177. The 'KMSKS' region signature appears at 218–222 (KMSKS). An ATP-binding site is contributed by lysine 221.

It belongs to the class-I aminoacyl-tRNA synthetase family. TyrS type 4 subfamily. As to quaternary structure, homodimer.

The protein resides in the cytoplasm. The enzyme catalyses tRNA(Tyr) + L-tyrosine + ATP = L-tyrosyl-tRNA(Tyr) + AMP + diphosphate + H(+). Its function is as follows. Catalyzes the attachment of tyrosine to tRNA(Tyr) in a two-step reaction: tyrosine is first activated by ATP to form Tyr-AMP and then transferred to the acceptor end of tRNA(Tyr). This chain is Tyrosine--tRNA ligase, found in Thermoplasma volcanium (strain ATCC 51530 / DSM 4299 / JCM 9571 / NBRC 15438 / GSS1).